The sequence spans 105 residues: Met repressor (105 aa).

This sequence belongs to the MetJ family. Homodimer.

The protein resides in the cytoplasm. Its function is as follows. This regulatory protein, when combined with SAM (S-adenosylmethionine) represses the expression of the methionine regulon and of enzymes involved in SAM synthesis. This chain is Met repressor, found in Erwinia tasmaniensis (strain DSM 17950 / CFBP 7177 / CIP 109463 / NCPPB 4357 / Et1/99).